A 330-amino-acid polypeptide reads, in one-letter code: Mas-related G-protein coupled receptor member X2 (330 aa).

The Extracellular portion of the chain corresponds to 1-33 (MDPTTPAWGNESTTMNGNDQALPLLCGKETLIP). A helical membrane pass occupies residues 34-54 (VFLILFIALVGLVGNGFVLWL). Residues 55 to 63 (LGFCMRRNA) lie on the Cytoplasmic side of the membrane. A helical transmembrane segment spans residues 64-84 (FSVYVLSLAGADFLFLCFQLI). At 85-96 (NCLVYLSNFFCS) the chain is on the extracellular side. Residues 97–117 (ISIDFPSFFTTVMTCAYLAGL) form a helical membrane-spanning segment. Residues 118–144 (SMLSTISTERCLSVLWPIWYRCRRPRH) lie on the Cytoplasmic side of the membrane. The helical transmembrane segment at 145-165 (LSAVVCVLLWALSLLLSILEG) threads the bilayer. Residues 166-184 (KFCGFFFSDGDSGWCQTFD) are Extracellular-facing. The chain crosses the membrane as a helical span at residues 185–205 (FITAAWLIFLFMVLCGSSLAL). Over 206–228 (LVRILCGSRGLPLTRLYLTILLT) the chain is Cytoplasmic. A helical membrane pass occupies residues 229–249 (VLVFLLCGLPFGIQWFLILWI). The Extracellular segment spans residues 250–264 (WENSDVLFCHIHPVS). Residues 265 to 285 (VVLSSLNSSANPIIYFFVGTF) form a helical membrane-spanning segment. The Cytoplasmic segment spans residues 286–330 (RKQWRLQQPILKLALQRALQDTAEVDHSEGCFRQGTPEMSRSSLV).

Belongs to the G-protein coupled receptor 1 family. Mas subfamily.

The protein localises to the cell membrane. Mast cell-specific receptor for basic secretagogues, i.e. cationic amphiphilic drugs, as well as endo- or exogenous peptides, consisting of a basic head group and a hydrophobic core. Recognizes and binds small molecules containing a cyclized tetrahydroisoquinoline (THIQ), such as non-steroidal neuromuscular blocking drugs (NMBDs), including tubocurarine and atracurium. In response to these compounds, mediates pseudo-allergic reactions characterized by histamine release, inflammation and airway contraction. This is Mas-related G-protein coupled receptor member X2 (MRGPRX2) from Pongo pygmaeus (Bornean orangutan).